Consider the following 60-residue polypeptide: Translational regulator CsrA (60 aa).

It belongs to the CsrA/RsmA family. As to quaternary structure, homodimer; the beta-strands of each monomer intercalate to form a hydrophobic core, while the alpha-helices form wings that extend away from the core.

The protein localises to the cytoplasm. Its function is as follows. A key translational regulator that binds mRNA to regulate translation initiation and/or mRNA stability. Mediates global changes in gene expression, shifting from rapid growth to stress survival by linking envelope stress, the stringent response and the catabolite repression systems. Usually binds in the 5'-UTR; binding at or near the Shine-Dalgarno sequence prevents ribosome-binding, repressing translation, binding elsewhere in the 5'-UTR can activate translation and/or stabilize the mRNA. Its function is antagonized by small RNA(s). This Histophilus somni (strain 2336) (Haemophilus somnus) protein is Translational regulator CsrA.